Consider the following 275-residue polypeptide: Large ribosomal subunit protein uL2 (275 aa).

2 disordered regions span residues 36-55 (PKKR…RHKG) and 223-275 (VVMN…RHAR).

Belongs to the universal ribosomal protein uL2 family. In terms of assembly, part of the 50S ribosomal subunit. Forms a bridge to the 30S subunit in the 70S ribosome.

Functionally, one of the primary rRNA binding proteins. Required for association of the 30S and 50S subunits to form the 70S ribosome, for tRNA binding and peptide bond formation. It has been suggested to have peptidyltransferase activity; this is somewhat controversial. Makes several contacts with the 16S rRNA in the 70S ribosome. The chain is Large ribosomal subunit protein uL2 from Thiobacillus denitrificans (strain ATCC 25259 / T1).